Reading from the N-terminus, the 263-residue chain is Endonuclease 8 (263 aa).

Pro-2 serves as the catalytic Schiff-base intermediate with DNA. Glu-3 acts as the Proton donor in catalysis. The active-site Proton donor; for beta-elimination activity is Lys-53. DNA contacts are provided by Gln-70, Arg-125, and Asn-169. The segment at 229 to 263 (KVFHRDGEACERCGGIIEKTTLSSRPFYWCPHCQK) adopts an FPG-type zinc-finger fold. The active-site Proton donor; for delta-elimination activity is the Arg-253.

The protein belongs to the FPG family. The cofactor is Zn(2+).

It catalyses the reaction 2'-deoxyribonucleotide-(2'-deoxyribose 5'-phosphate)-2'-deoxyribonucleotide-DNA = a 3'-end 2'-deoxyribonucleotide-(2,3-dehydro-2,3-deoxyribose 5'-phosphate)-DNA + a 5'-end 5'-phospho-2'-deoxyribonucleoside-DNA + H(+). Its function is as follows. Involved in base excision repair of DNA damaged by oxidation or by mutagenic agents. Acts as a DNA glycosylase that recognizes and removes damaged bases. Has a preference for oxidized pyrimidines, such as thymine glycol, 5,6-dihydrouracil and 5,6-dihydrothymine. Has AP (apurinic/apyrimidinic) lyase activity and introduces nicks in the DNA strand. Cleaves the DNA backbone by beta-delta elimination to generate a single-strand break at the site of the removed base with both 3'- and 5'-phosphates. The sequence is that of Endonuclease 8 from Salmonella paratyphi A (strain AKU_12601).